Reading from the N-terminus, the 92-residue chain is Small ribosomal subunit protein uS19 (92 aa).

Belongs to the universal ribosomal protein uS19 family.

Protein S19 forms a complex with S13 that binds strongly to the 16S ribosomal RNA. This is Small ribosomal subunit protein uS19 from Polaromonas naphthalenivorans (strain CJ2).